A 339-amino-acid chain; its full sequence is Serpentine receptor class r-10 (339 aa).

At 1–11 (MSGELWITLVD) the chain is on the extracellular side. Residues 12–32 (TADIVGVTLTFCVNIVLLGLL) traverse the membrane as a helical segment. Residues 33–42 (KTRGKNLGTY) are Cytoplasmic-facing. Residues 43–63 (KYLMAFFSVFSIFYAIIEFIL) form a helical membrane-spanning segment. Residues 64–92 (RPIMHIENTTFFLISRKRFNYSTKLGKIN) are Extracellular-facing. Asparagine 71 and asparagine 83 each carry an N-linked (GlcNAc...) asparagine glycan. The helical transmembrane segment at 93-113 (SAFYCACFATSFVVSGVHFVY) threads the bilayer. Residues 114 to 131 (RYFATCKPNLLRLFNLPT) lie on the Cytoplasmic side of the membrane. A helical transmembrane segment spans residues 132 to 152 (LLLWPLGCSVPVTMWASVSYF). Residues 153–201 (LYPDTEYTEAAVTNVLNNHYNWIKKENVSYIAYVYYQYENGVRHIYLKN) lie on the Extracellular side of the membrane. N-linked (GlcNAc...) asparagine glycosylation occurs at asparagine 179. Residues 202-222 (LLGCFVHYFVMSMTFVVMFYC) traverse the membrane as a helical segment. The Cytoplasmic portion of the chain corresponds to 223–254 (GYATWKTMNEHKDVSDRTRALQKQLFKALVLQ). The chain crosses the membrane as a helical span at residues 255–275 (TLIPTIFMYAPTGVMFIAPFF). Residues 276 to 284 (DVNLNANAN) are Extracellular-facing. A helical transmembrane segment spans residues 285–305 (FIVFCSFLYPGLDPLILILII). The Cytoplasmic portion of the chain corresponds to 306 to 339 (RDFRRTIFNFLCGKKNSVDESRSTTRANLSQVPT).

It belongs to the nematode receptor-like protein str family. As to quaternary structure, interacts with odr-4. As to expression, strongly expressed in the sensory cilia of AWA olfactory neurons, and at low levels in the CEP neurons.

The protein resides in the cell projection. It is found in the cilium membrane. An odorant receptor which affects chemotaxis to the volatile odorant diacetyl. Specifies AWA neuronal cell fate via the odr-7 pathway. The sequence is that of Serpentine receptor class r-10 from Caenorhabditis elegans.